The following is a 222-amino-acid chain: MKFFIDTANLDEILAAAELGVLDGVTTNPSLIAKIVGDPSNFTYNDFKAHIARICEIVDGPVSAEVTCLTAEEMIAEGEDLAAIHENVVVKCPLTIDGLKAIQHFSLNGIRTNATLVFSPNQALLAAKAGADYVSPFVGRLDDISTDGMELVKQIVTIYNNYGYPTEVIVASVRHPQHVVTAAMMGADIATIPYSVIKQLANHPLTDAGLKKFMDDAAVMKK.

The active-site Schiff-base intermediate with substrate is lysine 91.

It belongs to the transaldolase family. Type 3B subfamily.

It is found in the cytoplasm. It carries out the reaction D-sedoheptulose 7-phosphate + D-glyceraldehyde 3-phosphate = D-erythrose 4-phosphate + beta-D-fructose 6-phosphate. Its pathway is carbohydrate degradation; pentose phosphate pathway; D-glyceraldehyde 3-phosphate and beta-D-fructose 6-phosphate from D-ribose 5-phosphate and D-xylulose 5-phosphate (non-oxidative stage): step 2/3. In terms of biological role, transaldolase is important for the balance of metabolites in the pentose-phosphate pathway. This chain is Probable transaldolase, found in Pelodictyon phaeoclathratiforme (strain DSM 5477 / BU-1).